A 104-amino-acid polypeptide reads, in one-letter code: Nucleoid-associated protein jk2011 (104 aa).

It belongs to the YbaB/EbfC family. As to quaternary structure, homodimer.

Its subcellular location is the cytoplasm. The protein resides in the nucleoid. Its function is as follows. Binds to DNA and alters its conformation. May be involved in regulation of gene expression, nucleoid organization and DNA protection. This Corynebacterium jeikeium (strain K411) protein is Nucleoid-associated protein jk2011.